Reading from the N-terminus, the 777-residue chain is Gliding motility regulatory protein (777 aa).

Residues 1-108 (MDTEALKKSL…SDLNEDLSGA (108 aa)) form the HPt domain. The residue at position 49 (His49) is a Phosphohistidine; by autocatalysis. Disordered stretches follow at residues 129–149 (TPPA…PPAP) and 164–212 (PAPV…KSAV). Composition is skewed to pro residues over residues 139 to 149 (VAPPPAPPPAP) and 164 to 177 (PAPV…PPTQ). Positions 178-197 (APVAEPGAHAAAAAPHPAAA) are enriched in low complexity. In terms of domain architecture, Histidine kinase spans 270 to 509 (DISNEVREQL…TITLRLPQSL (240 aa)). The CheW-like domain maps to 511–645 (LMKVLLVRLG…VPDIMAEVRR (135 aa)). One can recognise a Response regulatory domain in the interval 660–776 (RVLLVDDSPI…EVLAQAIDRL (117 aa)). Asp709 carries the 4-aspartylphosphate modification.

The enzyme catalyses ATP + protein L-histidine = ADP + protein N-phospho-L-histidine.. FrzE is involved in a sensory transduction pathway that controls the frequency at which cells reverse their gliding direction. FrzE seems to be capable of autophosphorylating itself on a histidine residue and then to transfer that group to an aspartate residue in the C-terminal part of the protein. The chain is Gliding motility regulatory protein (frzE) from Myxococcus xanthus.